We begin with the raw amino-acid sequence, 166 residues long: Co-chaperone protein HscB homolog (166 aa).

The region spanning 3 to 75 (QYFTLFRIEP…IDRAAYLLKT (73 aa)) is the J domain.

The protein belongs to the HscB family. Interacts with HscA and stimulates its ATPase activity.

Functionally, co-chaperone involved in the maturation of iron-sulfur cluster-containing proteins. Seems to help targeting proteins to be folded toward HscA. The chain is Co-chaperone protein HscB homolog from Neisseria meningitidis serogroup A / serotype 4A (strain DSM 15465 / Z2491).